The chain runs to 695 residues: Probable rhamnogalacturonate lyase C (695 aa).

Residues 1 to 21 (MFLPSRKALAFLACLASHSVA) form the signal peptide. N-linked (GlcNAc...) asparagine glycans are attached at residues Asn-28, Asn-96, Asn-118, Asn-144, Asn-199, Asn-285, Asn-532, and Asn-638.

Belongs to the polysaccharide lyase 4 family.

Its subcellular location is the secreted. It carries out the reaction Endotype eliminative cleavage of L-alpha-rhamnopyranosyl-(1-&gt;4)-alpha-D-galactopyranosyluronic acid bonds of rhamnogalacturonan I domains in ramified hairy regions of pectin leaving L-rhamnopyranose at the reducing end and 4-deoxy-4,5-unsaturated D-galactopyranosyluronic acid at the non-reducing end.. In terms of biological role, pectinolytic enzymes consist of four classes of enzymes: pectin lyase, polygalacturonase, pectin methylesterase and rhamnogalacturonase. Degrades the rhamnogalacturonan I (RG-I) backbone of pectin. This chain is Probable rhamnogalacturonate lyase C (rglC), found in Aspergillus oryzae (strain ATCC 42149 / RIB 40) (Yellow koji mold).